The primary structure comprises 141 residues: Hemoglobin subunit alpha-D (141 aa).

The region spanning 1 to 141 is the Globin domain; sequence MLGAEETALV…VAAVLAEKYR (141 aa). Heme b contacts are provided by His-58 and His-87.

Belongs to the globin family. Heterotetramer of two alpha-D chains and two beta chains. Red blood cells.

Its function is as follows. Involved in oxygen transport from the lung to the various peripheral tissues. The sequence is that of Hemoglobin subunit alpha-D (HBAD) from Phalacrocorax carbo (Great cormorant).